A 654-amino-acid chain; its full sequence is Peptide-N(4)-(N-acetyl-beta-glucosaminyl)asparagine amidase (654 aa).

Residue A2 is modified to N-acetylalanine. One can recognise a PUB domain in the interval 30-91 (EASKLLLTYA…EGETHLIFPK (62 aa)). The interval 112–163 (RLDGSNKSHKVKSSQQPAASTQLPTTPSSNPSGLNQHTRNRQGQSSDPPSAS) is disordered. The segment covering 124–163 (SSQQPAASTQLPTTPSSNPSGLNQHTRNRQGQSSDPPSAS) has biased composition (polar residues). T137 carries the post-translational modification Phosphothreonine. Zn(2+)-binding residues include C250, C253, C283, and C286. Catalysis depends on C309, which acts as the Nucleophile. Residues H336 and D353 contribute to the active site. The PAW domain maps to 454 to 654 (ELGGRISGSV…LEIIIKFSDL (201 aa)).

Belongs to the transglutaminase-like superfamily. PNGase family. As to quaternary structure, component of a complex required to couple retrotranslocation, ubiquitination and deglycosylation composed of NGLY1, SAKS1, AMFR, VCP and RAD23B. Interacts with the proteasome components RAD23B and PSMC1. Interacts with directly with VCP. Interacts with DERL1, bringing it close to the endoplasmic reticulum membrane. Interacts with SAKS1. Requires Zn(2+) as cofactor.

The protein resides in the cytoplasm. It catalyses the reaction Hydrolysis of an N(4)-(acetyl-beta-D-glucosaminyl)asparagine residue in which the glucosamine residue may be further glycosylated, to yield a (substituted) N-acetyl-beta-D-glucosaminylamine and a peptide containing an aspartate residue.. Its activity is regulated as follows. Inhibited by Z-VAD-fmk, a well-known caspase inhibitor, which inhibits enzyme activity through covalent binding of the carbohydrate to the single Cys-306 residue. Functionally, specifically deglycosylates the denatured form of N-linked glycoproteins in the cytoplasm and assists their proteasome-mediated degradation. Cleaves the beta-aspartyl-glucosamine (GlcNAc) of the glycan and the amide side chain of Asn, converting Asn to Asp. Prefers proteins containing high-mannose over those bearing complex type oligosaccharides. Can recognize misfolded proteins in the endoplasmic reticulum that are exported to the cytosol to be destroyed and deglycosylate them, while it has no activity toward native proteins. Deglycosylation is a prerequisite for subsequent proteasome-mediated degradation of some, but not all, misfolded glycoproteins. This is Peptide-N(4)-(N-acetyl-beta-glucosaminyl)asparagine amidase (NGLY1) from Homo sapiens (Human).